The sequence spans 901 residues: Probable inorganic carbon transporter subunit DabA (901 aa).

Residues cysteine 424, aspartate 426, histidine 606, and cysteine 621 each coordinate Zn(2+).

The protein belongs to the inorganic carbon transporter (TC 9.A.2) DabA family. As to quaternary structure, forms a complex with DabB. Requires Zn(2+) as cofactor.

Its subcellular location is the cell membrane. Part of an energy-coupled inorganic carbon pump. This chain is Probable inorganic carbon transporter subunit DabA, found in Staphylococcus aureus (strain Mu3 / ATCC 700698).